Here is a 131-residue protein sequence, read N- to C-terminus: D-ribose pyranase (131 aa).

Histidine 20 (proton donor) is an active-site residue. Residues aspartate 28, histidine 98, and 120 to 122 (YAN) contribute to the substrate site.

Belongs to the RbsD / FucU family. RbsD subfamily. As to quaternary structure, homodecamer.

It localises to the cytoplasm. The enzyme catalyses beta-D-ribopyranose = beta-D-ribofuranose. Its pathway is carbohydrate metabolism; D-ribose degradation; D-ribose 5-phosphate from beta-D-ribopyranose: step 1/2. Functionally, catalyzes the interconversion of beta-pyran and beta-furan forms of D-ribose. This chain is D-ribose pyranase, found in Bacillus cereus (strain G9842).